Reading from the N-terminus, the 429-residue chain is Glucose-1-phosphate adenylyltransferase (429 aa).

Residues G162, 177-178 (EK), and S209 each bind alpha-D-glucose 1-phosphate.

The protein belongs to the bacterial/plant glucose-1-phosphate adenylyltransferase family. As to quaternary structure, homotetramer.

The catalysed reaction is alpha-D-glucose 1-phosphate + ATP + H(+) = ADP-alpha-D-glucose + diphosphate. The protein operates within glycan biosynthesis; glycogen biosynthesis. Involved in the biosynthesis of ADP-glucose, a building block required for the elongation reactions to produce glycogen. Catalyzes the reaction between ATP and alpha-D-glucose 1-phosphate (G1P) to produce pyrophosphate and ADP-Glc. This chain is Glucose-1-phosphate adenylyltransferase, found in Rippkaea orientalis (strain PCC 8801 / RF-1) (Cyanothece sp. (strain PCC 8801)).